Reading from the N-terminus, the 264-residue chain is Outer kinetochore KNL1 complex subunit sos7 (264 aa).

The stretch at 90 to 236 (EAEDNEKLET…SNQIKAAIHT (147 aa)) forms a coiled coil.

This sequence belongs to the KRE28 family. Component of the KNL1/SPC105 complex composed of at least spc7 and sos7. Part of the outer kinetochore KMN network that includes the KNL1, MIS12 and NDC80 complexes. Interacts (via C-terminus) with spc7 (via C-terminus); the interaction is direct.

The protein resides in the nucleus. The protein localises to the chromosome. It is found in the centromere. It localises to the kinetochore. Its function is as follows. Acts as a component of the outer kinetochore KNL1 complex that facilitates microtubule-kinetochore interactions and the spindle assembly checkpoint. Kinetochores, consisting of a centromere-associated inner segment and a microtubule-contacting outer segment, play a crucial role in chromosome segregation by mediating the physical connection between centromeric DNA and spindle microtubules. The outer kinetochore is made up of the ten-subunit KMN network, comprising the MIS12, NDC80 and KNL1 complexes, and auxiliary microtubule-associated components; together they connect the outer kinetochore with the inner kinetochore, bind microtubules, and mediate interactions with mitotic checkpoint proteins that delay anaphase until chromosomes are bioriented on the spindle. The chain is Outer kinetochore KNL1 complex subunit sos7 (sos7) from Schizosaccharomyces pombe (strain 972 / ATCC 24843) (Fission yeast).